The primary structure comprises 162 residues: Transmembrane protein 92 (162 aa).

Residues 1–22 (MLDTWVWGTLTLTFGLLSSLQG) form the signal peptide. Topologically, residues 23–63 (VSFNETANTCDILNCPKGFTCCVKECCPERKVWDPANDRFR) are extracellular. A helical transmembrane segment spans residues 64–84 (FLVILACIIFPILFICALVSL). Topologically, residues 85–162 (FCPNCTELQH…QMRGRAYATL (78 aa)) are cytoplasmic. A disordered region spans residues 134 to 162 (TPPTEPPPPYSLRPEGPAGQMRGRAYATL).

Its subcellular location is the membrane. In Mus musculus (Mouse), this protein is Transmembrane protein 92 (Tmem92).